Here is a 320-residue protein sequence, read N- to C-terminus: Lipoyl synthase (320 aa).

The segment at Met-1–Pro-27 is disordered. A compositionally biased stretch (basic and acidic residues) spans Arg-16 to Asp-25. 7 residues coordinate [4Fe-4S] cluster: Cys-61, Cys-66, Cys-72, Cys-87, Cys-91, Cys-94, and Ser-300. The 217-residue stretch at Trp-73–Leu-289 folds into the Radical SAM core domain.

It belongs to the radical SAM superfamily. Lipoyl synthase family. Requires [4Fe-4S] cluster as cofactor.

Its subcellular location is the cytoplasm. It catalyses the reaction [[Fe-S] cluster scaffold protein carrying a second [4Fe-4S](2+) cluster] + N(6)-octanoyl-L-lysyl-[protein] + 2 oxidized [2Fe-2S]-[ferredoxin] + 2 S-adenosyl-L-methionine + 4 H(+) = [[Fe-S] cluster scaffold protein] + N(6)-[(R)-dihydrolipoyl]-L-lysyl-[protein] + 4 Fe(3+) + 2 hydrogen sulfide + 2 5'-deoxyadenosine + 2 L-methionine + 2 reduced [2Fe-2S]-[ferredoxin]. The protein operates within protein modification; protein lipoylation via endogenous pathway; protein N(6)-(lipoyl)lysine from octanoyl-[acyl-carrier-protein]: step 2/2. Functionally, catalyzes the radical-mediated insertion of two sulfur atoms into the C-6 and C-8 positions of the octanoyl moiety bound to the lipoyl domains of lipoate-dependent enzymes, thereby converting the octanoylated domains into lipoylated derivatives. The protein is Lipoyl synthase of Acidiphilium cryptum (strain JF-5).